Reading from the N-terminus, the 226-residue chain is Spermatogenesis-associated protein 25 (226 aa).

The chain crosses the membrane as a helical span at residues 153 to 173; the sequence is ICILTLAMMIAGIPTVPVPGL.

Belongs to the SPATA25 family. Expressed strongly in testis, weakly in epididymis and not detected in other tissues.

The protein localises to the membrane. Functionally, may play a role in spermatogenesis. This is Spermatogenesis-associated protein 25 (Spata25) from Mus musculus (Mouse).